The chain runs to 419 residues: Akuammiline synthase 1 (419 aa).

The active-site Proton acceptor is the His151. Positions 206-213 match the Nuclear localization signal motif; it reads TRRFVFPA. Asp359 functions as the Proton acceptor in the catalytic mechanism.

It belongs to the plant acyltransferase family. Monomer.

Its subcellular location is the cytoplasm. It is found in the nucleus. The catalysed reaction is rhazimol + acetyl-CoA = akuammiline + CoA + H(+). Its pathway is alkaloid biosynthesis. Acyltransferase involved in the biosynthesis of akuammilan monoterpene indole alkaloids (MIAs) natural products, components with various biological properties such as antidiabetic, antibacterial, anti-inflammatory, anticancer, and antimalarial activities. Catalyzes the conversion of rhazimol to akuammiline. The chain is Akuammiline synthase 1 from Alstonia scholaris (Dogbane).